Reading from the N-terminus, the 173-residue chain is Ribosome maturation factor RimM (173 aa).

The 80-residue stretch at 90 to 169 (EDEYFWFDIL…RIDTKGAQDI (80 aa)) folds into the PRC barrel domain.

This sequence belongs to the RimM family. Binds ribosomal protein uS19.

It localises to the cytoplasm. An accessory protein needed during the final step in the assembly of 30S ribosomal subunit, possibly for assembly of the head region. Essential for efficient processing of 16S rRNA. May be needed both before and after RbfA during the maturation of 16S rRNA. It has affinity for free ribosomal 30S subunits but not for 70S ribosomes. The sequence is that of Ribosome maturation factor RimM from Nitratiruptor sp. (strain SB155-2).